Reading from the N-terminus, the 311-residue chain is Pyrimidine-specific ribonucleoside hydrolase RihA (311 aa).

Residue His240 is part of the active site.

This sequence belongs to the IUNH family. RihA subfamily.

Hydrolyzes with equal efficiency cytidine or uridine to ribose and cytosine or uracil, respectively. This is Pyrimidine-specific ribonucleoside hydrolase RihA from Escherichia coli O7:K1 (strain IAI39 / ExPEC).